A 283-amino-acid polypeptide reads, in one-letter code: Phosphatidylglycerol--prolipoprotein diacylglyceryl transferase (283 aa).

A run of 4 helical transmembrane segments spans residues 19 to 39 (IGPITIRWYGLLIATAVLIGV), 59 to 79 (LSIWLVIGAIPAARIYYVLFQ), 90 to 110 (IIAIWQGGIAIHGAIIGGTLA), and 120 to 140 (VPFWQLADLVAPSLILGQAIG). Residue Arg-141 coordinates a 1,2-diacyl-sn-glycero-3-phospho-(1'-sn-glycerol). A run of 3 helical transmembrane segments spans residues 181–201 (TFLYESIWDLMVFALLITLFF), 212–232 (VGTLFMVYLATYSLGRLWIEG), and 245–265 (IAQVVSLTGIALGLAGLAWLY).

This sequence belongs to the Lgt family.

Its subcellular location is the cell inner membrane. The enzyme catalyses L-cysteinyl-[prolipoprotein] + a 1,2-diacyl-sn-glycero-3-phospho-(1'-sn-glycerol) = an S-1,2-diacyl-sn-glyceryl-L-cysteinyl-[prolipoprotein] + sn-glycerol 1-phosphate + H(+). It functions in the pathway protein modification; lipoprotein biosynthesis (diacylglyceryl transfer). Its function is as follows. Catalyzes the transfer of the diacylglyceryl group from phosphatidylglycerol to the sulfhydryl group of the N-terminal cysteine of a prolipoprotein, the first step in the formation of mature lipoproteins. The polypeptide is Phosphatidylglycerol--prolipoprotein diacylglyceryl transferase (Nostoc sp. (strain PCC 7120 / SAG 25.82 / UTEX 2576)).